A 139-amino-acid chain; its full sequence is Putative lipoprotein MIP_01412 (139 aa).

An N-terminal signal peptide occupies residues 1–19; sequence MRNRTVAAGAVLTAALLGA. C20 carries the N-palmitoyl cysteine lipid modification. A lipid anchor (S-diacylglycerol cysteine) is attached at C20.

The protein belongs to the mycobacterial 19 kDa antigen family.

It localises to the cell membrane. This chain is Putative lipoprotein MIP_01412, found in Mycobacterium indicus pranii (strain DSM 45239 / MTCC 9506).